A 398-amino-acid polypeptide reads, in one-letter code: MRKVGITLSVVALVIMGFVAGCIGGTQTQGEKVKVAVLFDVGGRGDLSFNDMAYLGAERAKKELGVEVEYMTPKSREDMVPLLKQLAESKEYDLLVLIGFLWTTPLDQVADQYPDQKFALIDSTTGKVRENEVDILFREQEAAALIGVIASGMAYELGGDTIGAVAGMDIPPLWKFHIGYLYGAKYFEKKTGKPVKLLWQYTGTFTDTQVGYTTGMQLLQQGAKVLYGLAGLTHVGMFDAVIDWNKQGKGKALAIGQDASQEWYAPEYIPISGAKRVDVAVYTAIEMVVKNQWKGGIMTLGLKEGGVGYWNLDGVRQFAEFAQEGGKLKDMTPEDVVRIVKEQREKYIKPEVWEIVRELEEKIKNGEIKFKTPQSHDEYEQIIKELEKGNLDAALEKE.

A signal peptide spans 1–21; sequence MRKVGITLSVVALVIMGFVAG. N-acetylcysteine is present on C22. C22 is lipidated: S-archaeol cysteine.

This sequence belongs to the BMP lipoprotein family.

The protein localises to the cell membrane. This is an uncharacterized protein from Pyrococcus furiosus (strain ATCC 43587 / DSM 3638 / JCM 8422 / Vc1).